The sequence spans 563 residues: Eukaryotic translation initiation factor 3 subunit D-1 (563 aa).

The segment at 98–136 (VQKPPHQRGRFRNMRGRGGRGRNPRGGLNNHHHHGMTTL) is disordered. Residues 100–120 (KPPHQRGRFRNMRGRGGRGRN) show a composition bias toward basic residues. The interval 291-305 (EFDLLTVNESSVEPP) is RNA gate.

Belongs to the eIF-3 subunit D family. As to quaternary structure, component of the eukaryotic translation initiation factor 3 (eIF-3) complex. The eIF-3 complex interacts with pix.

Its subcellular location is the cytoplasm. Functionally, mRNA cap-binding component of the eukaryotic translation initiation factor 3 (eIF-3) complex, which is involved in protein synthesis of a specialized repertoire of mRNAs and, together with other initiation factors, stimulates binding of mRNA and methionyl-tRNAi to the 40S ribosome. The eIF-3 complex specifically targets and initiates translation of a subset of mRNAs involved in cell proliferation. In the eIF-3 complex, eif3d specifically recognizes and binds the 7-methylguanosine cap of a subset of mRNAs. The protein is Eukaryotic translation initiation factor 3 subunit D-1 of Drosophila pseudoobscura pseudoobscura (Fruit fly).